The chain runs to 365 residues: UDP-N-acetylglucosamine--N-acetylmuramyl-(pentapeptide) pyrophosphoryl-undecaprenol N-acetylglucosamine transferase (365 aa).

UDP-N-acetyl-alpha-D-glucosamine is bound by residues threonine 17–glycine 19, asparagine 129, arginine 167, serine 194, isoleucine 250, alanine 269–glutamate 274, and glutamine 295.

The protein belongs to the glycosyltransferase 28 family. MurG subfamily.

The protein localises to the cell inner membrane. The enzyme catalyses di-trans,octa-cis-undecaprenyl diphospho-N-acetyl-alpha-D-muramoyl-L-alanyl-D-glutamyl-meso-2,6-diaminopimeloyl-D-alanyl-D-alanine + UDP-N-acetyl-alpha-D-glucosamine = di-trans,octa-cis-undecaprenyl diphospho-[N-acetyl-alpha-D-glucosaminyl-(1-&gt;4)]-N-acetyl-alpha-D-muramoyl-L-alanyl-D-glutamyl-meso-2,6-diaminopimeloyl-D-alanyl-D-alanine + UDP + H(+). It participates in cell wall biogenesis; peptidoglycan biosynthesis. Its function is as follows. Cell wall formation. Catalyzes the transfer of a GlcNAc subunit on undecaprenyl-pyrophosphoryl-MurNAc-pentapeptide (lipid intermediate I) to form undecaprenyl-pyrophosphoryl-MurNAc-(pentapeptide)GlcNAc (lipid intermediate II). This Shewanella sediminis (strain HAW-EB3) protein is UDP-N-acetylglucosamine--N-acetylmuramyl-(pentapeptide) pyrophosphoryl-undecaprenol N-acetylglucosamine transferase.